The chain runs to 94 residues: Cell division protein CrgA (94 aa).

Helical transmembrane passes span 31 to 51 and 71 to 91; these read VWFVALFVGLMLIGLIWLLVF and LGPWNYAIAFAFMITGLLLTM.

It belongs to the CrgA family.

The protein resides in the cell membrane. In terms of biological role, involved in cell division. The polypeptide is Cell division protein CrgA (Mycobacterium sp. (strain JLS)).